An 88-amino-acid polypeptide reads, in one-letter code: Small ribosomal subunit protein bS20 (88 aa).

A compositionally biased stretch (basic residues) spans 1-22 (MANIKSSKKRSIQSEKKRKYNS). The tract at residues 1–26 (MANIKSSKKRSIQSEKKRKYNSSKKS) is disordered.

It belongs to the bacterial ribosomal protein bS20 family.

In terms of biological role, binds directly to 16S ribosomal RNA. The polypeptide is Small ribosomal subunit protein bS20 (Wigglesworthia glossinidia brevipalpis).